A 55-amino-acid chain; its full sequence is Large ribosomal subunit protein bL33 (55 aa).

The protein belongs to the bacterial ribosomal protein bL33 family.

The sequence is that of Large ribosomal subunit protein bL33 from Vibrio atlanticus (strain LGP32) (Vibrio splendidus (strain Mel32)).